We begin with the raw amino-acid sequence, 192 residues long: MGLLNSKNPQSKQAHILLLGLDSAGKSTLLYRLKFAETLATIPTIGFNVEMVQLQSSLTLTVWDVGGQEKMRTVWDCYCENAQGLMYVVDCSEGKKRLEDSRKEFKHILKNEHIKNTPVVILANKQDLPGALSAEDITRMFKVKKLCSNRNWYVQPCCAVTGEGLDDGFRKLTEFLKSYRRTRETLAIFKQK.

Glycine 2 carries N-myristoyl glycine lipidation. GTP-binding positions include 20-27 (GLDSAGKS), 64-68 (DVGGQ), and 124-127 (NKQD).

The protein belongs to the small GTPase superfamily. Arf family. Interacts with ARL14EP.

It is found in the cytoplasmic vesicle. Functionally, GTPase that recruits MYO1E to MHC class II-containing vesicles via the effector protein ARL14EP and hence controls the movement of these vesicles along the actin cytoskeleton in dendritic cells. This is ADP-ribosylation factor-like protein 14 (Arl14) from Mus musculus (Mouse).